Here is a 487-residue protein sequence, read N- to C-terminus: Glutamate--tRNA ligase (487 aa).

A 'HIGH' region motif is present at residues 13–23 (PSPTGLFHIGG). Positions 255-259 (KLSKR) match the 'KMSKS' region motif. Lys258 contacts ATP.

Belongs to the class-I aminoacyl-tRNA synthetase family. Glutamate--tRNA ligase type 1 subfamily. Monomer.

The protein resides in the cytoplasm. It catalyses the reaction tRNA(Glu) + L-glutamate + ATP = L-glutamyl-tRNA(Glu) + AMP + diphosphate. Catalyzes the attachment of glutamate to tRNA(Glu) in a two-step reaction: glutamate is first activated by ATP to form Glu-AMP and then transferred to the acceptor end of tRNA(Glu). The chain is Glutamate--tRNA ligase from Malacoplasma penetrans (strain HF-2) (Mycoplasma penetrans).